The following is a 397-amino-acid chain: Digeranylgeranylglycerophospholipid reductase 3 (397 aa).

The FAD site is built by alanine 16, aspartate 35, cysteine 46, alanine 47, glycine 49, arginine 102, alanine 126, aspartate 283, glycine 295, and isoleucine 296. A 2,3-bis-O-(geranylgeranyl)-sn-glycerol 1-phospholipid is bound at residue lysine 338.

The protein belongs to the geranylgeranyl reductase family. DGGGPL reductase subfamily. Requires FAD as cofactor.

It carries out the reaction a 2,3-bis-O-phytanyl-sn-glycerol 1-phospholipid + 8 A = a 2,3-bis-O-(geranylgeranyl)-sn-glycerol 1-phospholipid + 8 AH2. It catalyses the reaction 2,3-bis-O-(phytanyl)-sn-glycerol 1-phosphate + 8 A = 2,3-bis-O-(geranylgeranyl)-sn-glycerol 1-phosphate + 8 AH2. The catalysed reaction is CDP-2,3-bis-O-(geranylgeranyl)-sn-glycerol + 8 AH2 = CDP-2,3-bis-O-(phytanyl)-sn-glycerol + 8 A. The enzyme catalyses archaetidylserine + 8 AH2 = 2,3-bis-O-phytanyl-sn-glycero-3-phospho-L-serine + 8 A. Its pathway is membrane lipid metabolism; glycerophospholipid metabolism. Is involved in the reduction of 2,3-digeranylgeranylglycerophospholipids (unsaturated archaeols) into 2,3-diphytanylglycerophospholipids (saturated archaeols) in the biosynthesis of archaeal membrane lipids. Catalyzes the formation of archaetidic acid (2,3-di-O-phytanyl-sn-glyceryl phosphate) from 2,3-di-O-geranylgeranylglyceryl phosphate (DGGGP) via the hydrogenation of each double bond of the isoprenoid chains. Is also probably able to reduce double bonds of geranyl groups in CDP-2,3-bis-O-(geranylgeranyl)-sn-glycerol and archaetidylserine, thus acting at various stages in the biosynthesis of archaeal membrane lipids. The polypeptide is Digeranylgeranylglycerophospholipid reductase 3 (Methanosphaera stadtmanae (strain ATCC 43021 / DSM 3091 / JCM 11832 / MCB-3)).